The sequence spans 630 residues: Alpha-1,3-mannosyltransferase MNT3 (630 aa).

Over 1–14 (MLKSLKSRRLILKR) the chain is Cytoplasmic. Residues 15–31 (LVTLLLSLFFSYLIFSA) form a helical; Signal-anchor for type II membrane protein membrane-spanning segment. The Lumenal portion of the chain corresponds to 32 to 630 (SRNVTSSNKL…NDISRTWNAN (599 aa)). N-linked (GlcNAc...) asparagine glycosylation is found at Asn34 and Asn168.

Belongs to the MNN1/MNT family.

It localises to the golgi apparatus membrane. It participates in protein modification; protein glycosylation. Functionally, mannosyltransferase involved in adding the 4th and 5th mannose residues of O-linked glycans. This chain is Alpha-1,3-mannosyltransferase MNT3 (MNT3), found in Saccharomyces cerevisiae (strain ATCC 204508 / S288c) (Baker's yeast).